The chain runs to 128 residues: Fluoride-specific ion channel FluC (128 aa).

4 helical membrane passes run 3-23, 34-54, 69-89, and 100-120; these read FSVIFAVGIGGFFGAISRFLI, LFPVGTLTVNVLGSFIIGFLY, FITGFLGALTTFSTFSLETLL, and FLNILLNVILTISSTFAAIIL. 2 residues coordinate Na(+): glycine 75 and threonine 78.

It belongs to the fluoride channel Fluc/FEX (TC 1.A.43) family.

It localises to the cell inner membrane. It catalyses the reaction fluoride(in) = fluoride(out). With respect to regulation, na(+) is not transported, but it plays an essential structural role and its presence is essential for fluoride channel function. In terms of biological role, fluoride-specific ion channel. Important for reducing fluoride concentration in the cell, thus reducing its toxicity. The polypeptide is Fluoride-specific ion channel FluC (Nitratiruptor sp. (strain SB155-2)).